The sequence spans 500 residues: Glucose-6-phosphate isomerase (500 aa).

The active-site Proton donor is E332. Residues H363 and K473 contribute to the active site.

This sequence belongs to the GPI family.

It is found in the cytoplasm. The catalysed reaction is alpha-D-glucose 6-phosphate = beta-D-fructose 6-phosphate. It participates in carbohydrate biosynthesis; gluconeogenesis. The protein operates within carbohydrate degradation; glycolysis; D-glyceraldehyde 3-phosphate and glycerone phosphate from D-glucose: step 2/4. Functionally, catalyzes the reversible isomerization of glucose-6-phosphate to fructose-6-phosphate. The chain is Glucose-6-phosphate isomerase from Rhizorhabdus wittichii (strain DSM 6014 / CCUG 31198 / JCM 15750 / NBRC 105917 / EY 4224 / RW1) (Sphingomonas wittichii).